Reading from the N-terminus, the 453-residue chain is Nuclear distribution protein PAC1-2 (453 aa).

A LisH domain is found at 9 to 41 (QADELHKSIVAYLTANNLSTTAATLREELSLGE). The stretch at 63–87 (VVRLQKKVMDLESRSVALQSELEHS) forms a coiled coil. The interval 84-108 (LEHSTPASLSKRKDPTSWLPRSPPR) is disordered. WD repeat units follow at residues 113-154 (SHQA…RTLK), 156-196 (HTRA…KNTR), 200-243 (GHDH…CIKT), 246-285 (GHTGWVRDVVPSLDGRFLLSSGTDQTARLWDISAADPESK), 290-350 (GHEN…IKTL), 352-391 (GHDNWVSGLVFHPGGKYLLSVADDKTLRCWDLGDDGRCVK), and 396-448 (AHGQ…DKVV).

This sequence belongs to the WD repeat LIS1/nudF family. In terms of assembly, self-associates. Interacts with NDL1 and dynein.

The protein localises to the cytoplasm. Its subcellular location is the cytoskeleton. It is found in the spindle pole. Positively regulates the activity of the minus-end directed microtubule motor protein dynein. May enhance dynein-mediated microtubule sliding by targeting dynein to the microtubule plus end. Required for nuclear migration during vegetative growth as well as development. Required for retrograde early endosome (EE) transport from the hyphal tip. Required for localization of dynein to the mitotic spindle poles. Recruits additional proteins to the dynein complex at SPBs. The polypeptide is Nuclear distribution protein PAC1-2 (Chaetomium globosum (strain ATCC 6205 / CBS 148.51 / DSM 1962 / NBRC 6347 / NRRL 1970) (Soil fungus)).